A 267-amino-acid chain; its full sequence is 4-hydroxy-tetrahydrodipicolinate reductase (267 aa).

NAD(+) is bound by residues 8-13 and D34; that span reads GAAGRM. An NADP(+)-binding site is contributed by R35. Residues 98-100 and 122-125 each bind NAD(+); these read GTT and AANF. H155 serves as the catalytic Proton donor/acceptor. H156 lines the (S)-2,3,4,5-tetrahydrodipicolinate pocket. K159 acts as the Proton donor in catalysis. (S)-2,3,4,5-tetrahydrodipicolinate is bound at residue 165-166; sequence GT.

The protein belongs to the DapB family.

It localises to the cytoplasm. It carries out the reaction (S)-2,3,4,5-tetrahydrodipicolinate + NAD(+) + H2O = (2S,4S)-4-hydroxy-2,3,4,5-tetrahydrodipicolinate + NADH + H(+). It catalyses the reaction (S)-2,3,4,5-tetrahydrodipicolinate + NADP(+) + H2O = (2S,4S)-4-hydroxy-2,3,4,5-tetrahydrodipicolinate + NADPH + H(+). The protein operates within amino-acid biosynthesis; L-lysine biosynthesis via DAP pathway; (S)-tetrahydrodipicolinate from L-aspartate: step 4/4. In terms of biological role, catalyzes the conversion of 4-hydroxy-tetrahydrodipicolinate (HTPA) to tetrahydrodipicolinate. The sequence is that of 4-hydroxy-tetrahydrodipicolinate reductase from Pseudomonas putida (strain GB-1).